The following is a 293-amino-acid chain: Bisanhydrobacterioruberin hydratase (293 aa).

Transmembrane regions (helical) follow at residues 36-56, 66-86, 89-109, 134-154, 171-191, 199-219, and 254-274; these read IAVV…EGLL, FVLF…FPLV, RAGL…LVGV, FGLP…VLLL, ATVM…GFWI, GVPW…VLLF, and LFYT…GLLW.

This sequence belongs to the BABR hydratase family.

It is found in the membrane. The catalysed reaction is bacterioruberin = bisanhydrobacterioruberin + 2 H2O. The protein operates within carotenoid biosynthesis. Involved in the biosynthesis of the acyclic C50 carotenoid bacterioruberin (BR). Catalyzes the reaction that introduces hydroxyl groups to C3'' and C3''' of bisanhydrobacterioruberin (BABR) to generate BR. In Haloarcula japonica (strain ATCC 49778 / DSM 6131 / JCM 7785 / NBRC 101032 / NCIMB 13157 / TR-1), this protein is Bisanhydrobacterioruberin hydratase.